A 684-amino-acid polypeptide reads, in one-letter code: Ski-like protein (684 aa).

Residues Lys-50 and Lys-70 each participate in a glycyl lysine isopeptide (Lys-Gly) (interchain with G-Cter in SUMO2) cross-link. Residues 420–454 (SQSKELTKTEASKSISRQSEKAHSSGKLQKTVSYP) are disordered. Ser-452 carries the post-translational modification Phosphoserine. Glycyl lysine isopeptide (Lys-Gly) (interchain with G-Cter in SUMO2) cross-links involve residues Lys-489 and Lys-527. A coiled-coil region spans residues 536–684 (RTYLKQQEKL…ILKSSKTAKE (149 aa)).

This sequence belongs to the SKI family. Interacts with CPNE4 (via VWFA domain). Interacts with SMAD2, SMAD3 and RNF111. Isoform 1 interacts with WWP1. Post-translationally, ubiquitinated by RNF111 and ARK2C, promoting proteasomal degradation, leading to enhance the BMP-Smad signaling. Isoform SNON and isoform SNOA are widely expressed. Highest expression is found in skeletal muscle, followed by placenta and lung. Lowest expression in heart, brain and pancreas. Isoform SNOI expression is restricted to skeletal muscle.

Functionally, may have regulatory role in cell division or differentiation in response to extracellular signals. This is Ski-like protein (SKIL) from Homo sapiens (Human).